We begin with the raw amino-acid sequence, 222 residues long: Ras-related protein Rab11D (222 aa).

22-29 (GDSAVGKS) contributes to the GTP binding site. The Effector region motif lies at 44–52 (SKATIGVEF). GTP contacts are provided by residues 70–74 (DTAGQ) and 128–131 (NKTD). S-geranylgeranyl cysteine attachment occurs at residues cysteine 219 and cysteine 220.

The protein belongs to the small GTPase superfamily. Rab family.

The protein resides in the cell membrane. This Nicotiana tabacum (Common tobacco) protein is Ras-related protein Rab11D (RAB11D).